A 250-amino-acid polypeptide reads, in one-letter code: Hydroxyacylglutathione hydrolase (250 aa).

Zn(2+) contacts are provided by His53, His55, Asp57, His58, His111, Asp128, and His166.

The protein belongs to the metallo-beta-lactamase superfamily. Glyoxalase II family. In terms of assembly, monomer. Zn(2+) serves as cofactor.

The enzyme catalyses an S-(2-hydroxyacyl)glutathione + H2O = a 2-hydroxy carboxylate + glutathione + H(+). Its pathway is secondary metabolite metabolism; methylglyoxal degradation; (R)-lactate from methylglyoxal: step 2/2. Thiolesterase that catalyzes the hydrolysis of S-D-lactoyl-glutathione to form glutathione and D-lactic acid. The sequence is that of Hydroxyacylglutathione hydrolase from Methylobacillus flagellatus (strain ATCC 51484 / DSM 6875 / VKM B-1610 / KT).